A 371-amino-acid polypeptide reads, in one-letter code: UDP-N-acetylglucosamine--N-acetylmuramyl-(pentapeptide) pyrophosphoryl-undecaprenol N-acetylglucosamine transferase (371 aa).

UDP-N-acetyl-alpha-D-glucosamine contacts are provided by residues 15-17 (TGG), Asn-126, Arg-172, Ser-199, Ile-256, 275-280 (ALTVSE), and Gln-301.

This sequence belongs to the glycosyltransferase 28 family. MurG subfamily.

Its subcellular location is the cell inner membrane. It catalyses the reaction di-trans,octa-cis-undecaprenyl diphospho-N-acetyl-alpha-D-muramoyl-L-alanyl-D-glutamyl-meso-2,6-diaminopimeloyl-D-alanyl-D-alanine + UDP-N-acetyl-alpha-D-glucosamine = di-trans,octa-cis-undecaprenyl diphospho-[N-acetyl-alpha-D-glucosaminyl-(1-&gt;4)]-N-acetyl-alpha-D-muramoyl-L-alanyl-D-glutamyl-meso-2,6-diaminopimeloyl-D-alanyl-D-alanine + UDP + H(+). It functions in the pathway cell wall biogenesis; peptidoglycan biosynthesis. Functionally, cell wall formation. Catalyzes the transfer of a GlcNAc subunit on undecaprenyl-pyrophosphoryl-MurNAc-pentapeptide (lipid intermediate I) to form undecaprenyl-pyrophosphoryl-MurNAc-(pentapeptide)GlcNAc (lipid intermediate II). In Francisella philomiragia subsp. philomiragia (strain ATCC 25017 / CCUG 19701 / FSC 153 / O#319-036), this protein is UDP-N-acetylglucosamine--N-acetylmuramyl-(pentapeptide) pyrophosphoryl-undecaprenol N-acetylglucosamine transferase.